The sequence spans 477 residues: Transmembrane and coiled-coil domain protein 3 (477 aa).

Residue serine 46 is modified to Phosphoserine. The stretch at 112-153 (KQVFEKKNQKSAHSIAQLQKKLEQYHRKLREIEQNGASRSSK) forms a coiled coil. Disordered stretches follow at residues 168–188 (KDAH…KSGM) and 249–277 (PKYG…GAGG). A Phosphoserine modification is found at serine 253. Over residues 258–273 (SSGTSGSADSNGNQSF) the composition is skewed to polar residues. The stretch at 282-398 (DSQGKLAVIL…KLELHQQEQQ (117 aa)) forms a coiled coil. Helical transmembrane passes span 417 to 437 (VILA…KFVS) and 450 to 470 (FFAV…LCAI).

Belongs to the TEX28 family. As to quaternary structure, may form homodimers and heterodimers with TMCC2 or TMCC3 via the coiled-coil domains. Interacts with ribosomal proteins RPL4 and RPS6. Widely expressed, with highest levels in brain, spinal cord and testis.

It localises to the endoplasmic reticulum membrane. This chain is Transmembrane and coiled-coil domain protein 3, found in Homo sapiens (Human).